A 117-amino-acid polypeptide reads, in one-letter code: Large ribosomal subunit protein bL20 (117 aa).

Belongs to the bacterial ribosomal protein bL20 family.

In terms of biological role, binds directly to 23S ribosomal RNA and is necessary for the in vitro assembly process of the 50S ribosomal subunit. It is not involved in the protein synthesizing functions of that subunit. The chain is Large ribosomal subunit protein bL20 from Rickettsia canadensis (strain McKiel).